The primary structure comprises 228 residues: Ribulose-phosphate 3-epimerase, cytoplasmic isoform (228 aa).

Serine 12 lines the substrate pocket. A divalent metal cation-binding residues include histidine 37, aspartate 39, and histidine 70. Aspartate 39 serves as the catalytic Proton acceptor. Substrate is bound by residues histidine 70, 150–153 (GFGG), 179–181 (DGG), and 201–202 (GS). Aspartate 179 contributes to the a divalent metal cation binding site. The active-site Proton donor is the aspartate 179.

This sequence belongs to the ribulose-phosphate 3-epimerase family. As to quaternary structure, homodimer. Co(2+) serves as cofactor. The cofactor is Fe(2+). Requires Mn(2+) as cofactor. It depends on Zn(2+) as a cofactor. In terms of tissue distribution, predominantly accumulates in roots and seedlings.

Its subcellular location is the cytoplasm. The enzyme catalyses D-ribulose 5-phosphate = D-xylulose 5-phosphate. It participates in carbohydrate degradation; pentose phosphate pathway; D-xylulose 5-phosphate from D-ribulose 5-phosphate (non-oxidative stage): step 1/1. Functionally, catalyzes the reversible epimerization of D-ribulose 5-phosphate to D-xylulose 5-phosphate. In Oryza sativa subsp. japonica (Rice), this protein is Ribulose-phosphate 3-epimerase, cytoplasmic isoform.